Reading from the N-terminus, the 425-residue chain is D-amino acid dehydrogenase 2 (425 aa).

3–17 (ITVVGAGIVGISTAY) contacts FAD.

Belongs to the DadA oxidoreductase family. FAD serves as cofactor.

The catalysed reaction is a D-alpha-amino acid + A + H2O = a 2-oxocarboxylate + AH2 + NH4(+). Its function is as follows. Oxidative deamination of D-amino acids. The protein is D-amino acid dehydrogenase 2 (dadA2) of Ralstonia nicotianae (strain ATCC BAA-1114 / GMI1000) (Ralstonia solanacearum).